The following is a 288-amino-acid chain: MGRLTEAAAAGGGASAARSAGPPPAPLPLSSTSPGCAAAMASSEEDGTNGGASEASDEREAVGKRRRLGLLATIWLTFYNIAMTAGWLVLAIAMVRFYMEKGTHKGLYKSIQKTLKFFQTFALLEIVHCLIGIVPTSVLVAGVQVSSRIFMVWLVTHSIKPIQNEESVVLFLVAWTVTEITRYSFYTFSLLDHLPYFIKWARYNFFIILYPVGVAGELLTIYAALPYVKKTGMFSIRLPNKYNVSFDYYYFLLITMASYIPLFPQLYFHMLRQRRKVLHGEVIVEKDD.

Positions 1-59 (MGRLTEAAAAGGGASAARSAGPPPAPLPLSSTSPGCAAAMASSEEDGTNGGASEASDER) are disordered. Over 1 to 75 (MGRLTEAAAA…RRLGLLATIW (75 aa)) the chain is Cytoplasmic. The chain crosses the membrane as a helical span at residues 76–95 (LTFYNIAMTAGWLVLAIAMV). Topologically, residues 96–114 (RFYMEKGTHKGLYKSIQKT) are lumenal. A helical transmembrane segment spans residues 115–131 (LKFFQTFALLEIVHCLI). The Cytoplasmic segment spans residues 132 to 141 (GIVPTSVLVA). Residues 142–159 (GVQVSSRIFMVWLVTHSI) form a helical membrane-spanning segment. The Lumenal segment spans residues 160–165 (KPIQNE). The chain crosses the membrane as a helical span at residues 166-180 (ESVVLFLVAWTVTEI). Residues 181 to 203 (TRYSFYTFSLLDHLPYFIKWARY) lie on the Cytoplasmic side of the membrane. The helical transmembrane segment at 204-221 (NFFIILYPVGVAGELLTI) threads the bilayer. Residues tyrosine 210 and glutamate 217 contribute to the active site. The Lumenal segment spans residues 222-251 (YAALPYVKKTGMFSIRLPNKYNVSFDYYYF). Asparagine 243 carries an N-linked (GlcNAc...) asparagine glycan. The helical transmembrane segment at 252 to 269 (LLITMASYIPLFPQLYFH) threads the bilayer. Residues 270 to 288 (MLRQRRKVLHGEVIVEKDD) lie on the Cytoplasmic side of the membrane.

It belongs to the very long-chain fatty acids dehydratase HACD family. In terms of assembly, may interact with enzymes of the ELO family (including ELOVL1); with those enzymes that mediate condensation, the first of the four steps of the reaction cycle responsible for fatty acids elongation, may be part of a larger fatty acids elongase complex. Interacts with TECR. N-glycosylated. Expressed in heart.

The protein localises to the endoplasmic reticulum membrane. The enzyme catalyses a very-long-chain (3R)-3-hydroxyacyl-CoA = a very-long-chain (2E)-enoyl-CoA + H2O. The catalysed reaction is (3R)-hydroxyhexadecanoyl-CoA = (2E)-hexadecenoyl-CoA + H2O. It catalyses the reaction (3R)-hydroxyoctadecanoyl-CoA = (2E)-octadecenoyl-CoA + H2O. It carries out the reaction (3R)-hydroxyeicosanoyl-CoA = (2E)-eicosenoyl-CoA + H2O. The enzyme catalyses (3R)-hydroxydocosanoyl-CoA = (2E)-docosenoyl-CoA + H2O. The catalysed reaction is (3R)-hydroxytetracosanoyl-CoA = (2E)-tetracosenoyl-CoA + H2O. It catalyses the reaction (3R)-hydroxyhexacosanoyl-CoA = (2E)-hexacosenoyl-CoA + H2O. It functions in the pathway lipid metabolism; fatty acid biosynthesis. Catalyzes the third of the four reactions of the long-chain fatty acids elongation cycle. This endoplasmic reticulum-bound enzymatic process, allows the addition of two carbons to the chain of long- and very long-chain fatty acids/VLCFAs per cycle. This enzyme catalyzes the dehydration of the 3-hydroxyacyl-CoA intermediate into trans-2,3-enoyl-CoA, within each cycle of fatty acid elongation. Thereby, it participates in the production of VLCFAs of different chain lengths that are involved in multiple biological processes as precursors of membrane lipids and lipid mediators. The chain is Very-long-chain (3R)-3-hydroxyacyl-CoA dehydratase 1 (HACD1) from Ovis aries (Sheep).